We begin with the raw amino-acid sequence, 736 residues long: Phosphoribosylformylglycinamidine synthase subunit PurL (736 aa).

The active site involves His49. Positions 52 and 91 each coordinate ATP. Glu93 is a Mg(2+) binding site. Residues 94-97 (SHNH) and Arg116 each bind substrate. His95 serves as the catalytic Proton acceptor. Asp117 contacts Mg(2+). Gln240 lines the substrate pocket. Residue Asp268 participates in Mg(2+) binding. 312–314 (ESQ) provides a ligand contact to substrate. Residues Asp493 and Gly530 each coordinate ATP. Residue Asn531 participates in Mg(2+) binding. A substrate-binding site is contributed by Ser533.

Belongs to the FGAMS family. As to quaternary structure, monomer. Part of the FGAM synthase complex composed of 1 PurL, 1 PurQ and 2 PurS subunits.

Its subcellular location is the cytoplasm. It carries out the reaction N(2)-formyl-N(1)-(5-phospho-beta-D-ribosyl)glycinamide + L-glutamine + ATP + H2O = 2-formamido-N(1)-(5-O-phospho-beta-D-ribosyl)acetamidine + L-glutamate + ADP + phosphate + H(+). It functions in the pathway purine metabolism; IMP biosynthesis via de novo pathway; 5-amino-1-(5-phospho-D-ribosyl)imidazole from N(2)-formyl-N(1)-(5-phospho-D-ribosyl)glycinamide: step 1/2. Part of the phosphoribosylformylglycinamidine synthase complex involved in the purines biosynthetic pathway. Catalyzes the ATP-dependent conversion of formylglycinamide ribonucleotide (FGAR) and glutamine to yield formylglycinamidine ribonucleotide (FGAM) and glutamate. The FGAM synthase complex is composed of three subunits. PurQ produces an ammonia molecule by converting glutamine to glutamate. PurL transfers the ammonia molecule to FGAR to form FGAM in an ATP-dependent manner. PurS interacts with PurQ and PurL and is thought to assist in the transfer of the ammonia molecule from PurQ to PurL. The protein is Phosphoribosylformylglycinamidine synthase subunit PurL of Rhodopseudomonas palustris (strain TIE-1).